The primary structure comprises 136 residues: uncharacterized protein (136 aa).

Belongs to the MG439/MG440 family.

This is an uncharacterized protein from Mycoplasma pneumoniae (strain ATCC 29342 / M129 / Subtype 1) (Mycoplasmoides pneumoniae).